Here is a 284-residue protein sequence, read N- to C-terminus: Bifunctional protein FolD (284 aa).

NADP(+) contacts are provided by residues 166 to 168 (GAS), Ser191, and Ile232.

This sequence belongs to the tetrahydrofolate dehydrogenase/cyclohydrolase family. Homodimer.

It carries out the reaction (6R)-5,10-methylene-5,6,7,8-tetrahydrofolate + NADP(+) = (6R)-5,10-methenyltetrahydrofolate + NADPH. It catalyses the reaction (6R)-5,10-methenyltetrahydrofolate + H2O = (6R)-10-formyltetrahydrofolate + H(+). It functions in the pathway one-carbon metabolism; tetrahydrofolate interconversion. In terms of biological role, catalyzes the oxidation of 5,10-methylenetetrahydrofolate to 5,10-methenyltetrahydrofolate and then the hydrolysis of 5,10-methenyltetrahydrofolate to 10-formyltetrahydrofolate. This chain is Bifunctional protein FolD, found in Neisseria meningitidis serogroup B (strain ATCC BAA-335 / MC58).